The primary structure comprises 226 residues: Thiamine-phosphate synthase (226 aa).

4-amino-2-methyl-5-(diphosphooxymethyl)pyrimidine is bound by residues Q46–K50 and D83. D84 and D103 together coordinate Mg(2+). S122 contacts 4-amino-2-methyl-5-(diphosphooxymethyl)pyrimidine. 2-[(2R,5Z)-2-carboxy-4-methylthiazol-5(2H)-ylidene]ethyl phosphate is bound at residue T149–S151. K152 serves as a coordination point for 4-amino-2-methyl-5-(diphosphooxymethyl)pyrimidine. 2-[(2R,5Z)-2-carboxy-4-methylthiazol-5(2H)-ylidene]ethyl phosphate is bound by residues G181 and I201–T202.

Belongs to the thiamine-phosphate synthase family. It depends on Mg(2+) as a cofactor.

It catalyses the reaction 2-[(2R,5Z)-2-carboxy-4-methylthiazol-5(2H)-ylidene]ethyl phosphate + 4-amino-2-methyl-5-(diphosphooxymethyl)pyrimidine + 2 H(+) = thiamine phosphate + CO2 + diphosphate. The catalysed reaction is 2-(2-carboxy-4-methylthiazol-5-yl)ethyl phosphate + 4-amino-2-methyl-5-(diphosphooxymethyl)pyrimidine + 2 H(+) = thiamine phosphate + CO2 + diphosphate. The enzyme catalyses 4-methyl-5-(2-phosphooxyethyl)-thiazole + 4-amino-2-methyl-5-(diphosphooxymethyl)pyrimidine + H(+) = thiamine phosphate + diphosphate. Its pathway is cofactor biosynthesis; thiamine diphosphate biosynthesis; thiamine phosphate from 4-amino-2-methyl-5-diphosphomethylpyrimidine and 4-methyl-5-(2-phosphoethyl)-thiazole: step 1/1. In terms of biological role, condenses 4-methyl-5-(beta-hydroxyethyl)thiazole monophosphate (THZ-P) and 2-methyl-4-amino-5-hydroxymethyl pyrimidine pyrophosphate (HMP-PP) to form thiamine monophosphate (TMP). The polypeptide is Thiamine-phosphate synthase (Haemophilus influenzae (strain PittGG)).